Here is a 276-residue protein sequence, read N- to C-terminus: 3' cyclic ADP-D-ribose synthase HopAM1 (276 aa).

Over residues 20 to 38 (VEASQVKSAGTSSTTNIDS) the composition is skewed to polar residues. A disordered region spans residues 20 to 39 (VEASQVKSAGTSSTTNIDSK). The segment at 165–214 (KNGIAHAKKMAFFITPEWLGSDFCKQEFQWLSETKNKDIKSAFVIFKDVD) is TIR domain. Residue Gln-190 is part of the active site.

Homodimer.

It localises to the host cytoplasm. It is found in the host cytosol. The enzyme catalyses NAD(+) = 3'cADPR + nicotinamide + H(+). NAD(+) hydrolase (NADase) that cleaves NAD(+) into nicotinamide and 3' cyclic ADP-D-ribose (3'cADPR, v2-cADPR). Upon infiltration of A.thaliana with this bacteria an effector-triggered immunity-like phenotype (ETI-like, cell death with severe chlorosis) is seen, 3'cADPR levels rise while NAD(+) levels remain constant. Plant immune responses are suppressed. Triggers hypersensitive response-like cell death in Nicotiana tabacum cv. Xanthi and N.benthamiana when transiently expressed, depletes NAD(+) in N.benthamiana. Causes cell death upon induction in yeast due to NAD(+) depletion and/or 3'cADPR itself. Transgenic A.thaliana expressing HopAM1 suppresses its plant immune system upon challenge; the plants produce 3'cADPR without significantly depleting NAD(+). The protein is 3' cyclic ADP-D-ribose synthase HopAM1 of Pseudomonas syringae pv. tomato (strain ATCC BAA-871 / DC3000).